A 218-amino-acid polypeptide reads, in one-letter code: Small ribosomal subunit protein uS3 (218 aa).

An N-acetylmethionine modification is found at methionine 1. One can recognise a KH type-2 domain in the interval 23 to 95; sequence LNELFTREFN…TVVLFAEKIL (73 aa).

The protein belongs to the universal ribosomal protein uS3 family.

The polypeptide is Small ribosomal subunit protein uS3 (rps3) (Dictyostelium discoideum (Social amoeba)).